Reading from the N-terminus, the 1003-residue chain is Glycine--tRNA ligase (1003 aa).

The tract at residues 1 to 310 is glycine--tRNA ligase alpha subunit; it reads MSSQPLTLQD…VTAKQIPHIC (310 aa). The interval 311–1003 is glycine--tRNA ligase beta subunit; that stretch reads QDEDFLLEIG…CFGFYAWDAL (693 aa).

The protein belongs to the class-II aminoacyl-tRNA synthetase family.

Its subcellular location is the cytoplasm. The enzyme catalyses tRNA(Gly) + glycine + ATP = glycyl-tRNA(Gly) + AMP + diphosphate. The polypeptide is Glycine--tRNA ligase (glyQS) (Chlamydia muridarum (strain MoPn / Nigg)).